The primary structure comprises 213 residues: Orotate phosphoribosyltransferase (213 aa).

Residue Lys-26 participates in 5-phospho-alpha-D-ribose 1-diphosphate binding. Orotate is bound at residue 34-35 (FF). Residues 72 to 73 (YK), Arg-99, Lys-100, Lys-103, His-105, and 124 to 132 (DDVITAGTA) contribute to the 5-phospho-alpha-D-ribose 1-diphosphate site. Orotate contacts are provided by Thr-128 and Arg-156.

This sequence belongs to the purine/pyrimidine phosphoribosyltransferase family. PyrE subfamily. In terms of assembly, homodimer. The cofactor is Mg(2+).

The catalysed reaction is orotidine 5'-phosphate + diphosphate = orotate + 5-phospho-alpha-D-ribose 1-diphosphate. It functions in the pathway pyrimidine metabolism; UMP biosynthesis via de novo pathway; UMP from orotate: step 1/2. Functionally, catalyzes the transfer of a ribosyl phosphate group from 5-phosphoribose 1-diphosphate to orotate, leading to the formation of orotidine monophosphate (OMP). The protein is Orotate phosphoribosyltransferase of Escherichia coli O139:H28 (strain E24377A / ETEC).